The following is a 549-amino-acid chain: Mitogen-activated protein kinase 15 (549 aa).

Positions 1–20 (MCAAEVDRHVAQRYLIKRRL) are ubiquitin-conjugating. The 292-residue stretch at 14-305 (YLIKRRLGKG…AEQALQHPYV (292 aa)) folds into the Protein kinase domain. Residues 20 to 28 (LGKGAYGIV) and Lys43 contribute to the ATP site. The active-site Proton acceptor is the Asp138. Phosphothreonine is present on Thr176. Residues 176–178 (TEY) carry the TXY motif. Tyr178 is modified (phosphotyrosine). The interval 266–286 (LDALLPPDTPPEALDLLKRLL) is necessary to interact with ESRRA, to regulate its subcellular localization and to inhibit its transcriptional activity. Positions 301-382 (QHPYVQRFHC…ARTQSLKSGV (82 aa)) are requires for interaction with GABARAP, MAP1LC3B AND GABARAPL1. Positions 370 to 507 (ASPARTQSLK…PEPRPGRRMF (138 aa)) are disordered. 2 PXXXP motif repeats span residues 380–384 (SGVLP) and 387–391 (PAETP). PXXXP motif; regulates binding with chromatin and interaction with PCNA repeat units lie at residues 395–399 (RGPKP) and 403–407 (PGHDP). Positions 403–416 (PGHDPEHVEVRRQS) are enriched in basic and acidic residues. Omega-N-methylarginine is present on Arg451. Residues 456 to 467 (SLTSQAEAQAAN) show a composition bias toward polar residues. Positions 483–492 (AVGARRVPSR) are enriched in low complexity. Residues 493 to 502 (LPREAPEPRP) are compositionally biased toward basic and acidic residues.

Belongs to the protein kinase superfamily. CMGC Ser/Thr protein kinase family. MAP kinase subfamily. As to quaternary structure, interacts with TGFB1I1. Interacts with CSK/c-Src, ABL1 and RET. Interacts with GABARAP, MAP1LC3B and GABARAPL1; controls, in a kinase-dependent fashion, both basal and starvation-induced autophagy. Interacts with ESRRA; promotes re-localization of ESRRA to the cytoplasm through a XPO1-dependent mechanism then inhibits ESRRA transcriptional activity. Interacts with PCNA; the interaction is chromatin binding- and kinase activity-dependent and prevents MDM2-mediated PCNA destruction by inhibiting the association of PCNA with MDM2. Interacts with DVL2. Interacts with CLIC3; MAPK15 does not phosphorylates CLIC3. Post-translationally, autophosphorylated on Thr-176 and Tyr-178; activates the enzyme. Ubiquitinated. Ubiquitination may allow its tight kinase activity regulation and rapid turnover. May be ubiquitinated by a SCF E3 ligase. In terms of tissue distribution, expressed at all stages of oocyte meiotic maturation.

The protein localises to the cytoplasm. Its subcellular location is the cytoskeleton. The protein resides in the cilium basal body. It localises to the cell junction. It is found in the tight junction. The protein localises to the microtubule organizing center. Its subcellular location is the centrosome. The protein resides in the centriole. It localises to the cytoplasmic vesicle. It is found in the autophagosome. The protein localises to the golgi apparatus. Its subcellular location is the nucleus. The protein resides in the spindle. It carries out the reaction L-seryl-[protein] + ATP = O-phospho-L-seryl-[protein] + ADP + H(+). The catalysed reaction is L-threonyl-[protein] + ATP = O-phospho-L-threonyl-[protein] + ADP + H(+). With respect to regulation, activated by threonine and tyrosine phosphorylation. Inhibited by dual specificity phosphatases, such as DUSP1. Phosphorylation and activation in response to DNA damaging agents, serum stimulation. Constitutively activated when phosphorylated on Tyr-178. Activity depends on the relative rates of MAPK15 autophosphorylation and dephosphorylation by PTPN1. Atypical MAPK protein that regulates several process such as autophagy, ciliogenesis, protein trafficking/secretion and genome integrity, in a kinase activity-dependent manner. Controls both, basal and starvation-induced autophagy throught its interaction with GABARAP, MAP1LC3B and GABARAPL1 leading to autophagosome formation, SQSTM1 degradation and reduced MAP1LC3B inhibitory phosphorylation. Regulates primary cilium formation and the localization of ciliary proteins involved in cilium structure, transport, and signaling. Prevents the relocation of the sugar-adding enzymes from the Golgi to the endoplasmic reticulum, thereby restricting the production of sugar-coated proteins. Upon amino-acid starvation, mediates transitional endoplasmic reticulum site disassembly and inhibition of secretion. Binds to chromatin leading to MAPK15 activation and interaction with PCNA, that which protects genomic integrity by inhibiting MDM2-mediated degradation of PCNA. Regulates DA transporter (DAT) activity and protein expression via activation of RhoA. In response to H(2)O(2) treatment phosphorylates ELAVL1, thus preventing it from binding to the PDCD4 3'UTR and rendering the PDCD4 mRNA accessible to miR-21 and leading to its degradation and loss of protein expression. Also functions in a kinase activity-independent manner as a negative regulator of growth. Phosphorylates in vitro FOS and MBP. During oocyte maturation, plays a key role in the microtubule organization and meiotic cell cycle progression in oocytes, fertilized eggs, and early embryos. Interacts with ESRRA promoting its re-localization from the nucleus to the cytoplasm and then prevents its transcriptional activity. In Mus musculus (Mouse), this protein is Mitogen-activated protein kinase 15.